The following is a 258-amino-acid chain: Probable N-acetylglucosaminyl-phosphatidylinositol de-N-acetylase (258 aa).

The interval 147 to 170 (KSSSTTTTSTTSSSSSSSSLSNRT) is disordered. Residues 148–170 (SSSTTTTSTTSSSSSSSSLSNRT) show a composition bias toward low complexity.

This sequence belongs to the PIGL family.

Its subcellular location is the endoplasmic reticulum membrane. The catalysed reaction is a 6-(N-acetyl-alpha-D-glucosaminyl)-1-(1,2-diacyl-sn-glycero-3-phospho)-1D-myo-inositol + H2O = a 6-(alpha-D-glucosaminyl)-1-(1,2-diacyl-sn-glycero-3-phospho)-1D-myo-inositol + acetate. It functions in the pathway glycolipid biosynthesis; glycosylphosphatidylinositol-anchor biosynthesis. Functionally, involved in the second step of GPI biosynthesis. De-N-acetylation of N-acetylglucosaminyl-phosphatidylinositol. The protein is Probable N-acetylglucosaminyl-phosphatidylinositol de-N-acetylase (pigl) of Dictyostelium discoideum (Social amoeba).